Consider the following 276-residue polypeptide: E3 ubiquitin-protein ligase CCNB1IP1 (276 aa).

The segment at 10-52 (CNYRKCRIKLSGYAWVTACSHIFCDQHGSGEFSRSPAICPACN) adopts an RING-type; atypical zinc-finger fold. The stretch at 146–182 (MKKVLEEYKKKFSDISEKLMERNRQYQKLQGLYDSLR) forms a coiled coil.

As to quaternary structure, interacts with CCNB1, UBE2L3 and NF2. Post-translationally, ubiquitinated; autoubiquitinated. In terms of processing, phosphorylated by CDK1 on serine or threonine residues (in vitro). As to expression, expressed predominantly in the testes and 17 day embryos (corresponding to prophase I in females). Weakly or not expressed in other tissues.

Its subcellular location is the nucleus. It localises to the chromosome. The catalysed reaction is S-ubiquitinyl-[E2 ubiquitin-conjugating enzyme]-L-cysteine + [acceptor protein]-L-lysine = [E2 ubiquitin-conjugating enzyme]-L-cysteine + N(6)-ubiquitinyl-[acceptor protein]-L-lysine.. It functions in the pathway protein modification; protein ubiquitination. Its function is as follows. Ubiquitin E3 ligase that acts as a limiting factor for crossing-over during meiosis: required during zygonema to limit the colocalization of RNF212 with MutS-gamma-associated recombination sites and thereby establish early differentiation of crossover and non-crossover sites. Later, it is directed by MutL-gamma to stably accumulate at designated crossover sites. Probably promotes the dissociation of RNF212 and MutS-gamma to allow the progression of recombination and the implementation of the final steps of crossing over. Modulates cyclin-B levels and participates in the regulation of cell cycle progression through the G2 phase. Overexpression causes delayed entry into mitosis. The sequence is that of E3 ubiquitin-protein ligase CCNB1IP1 (Ccnb1ip1) from Mus musculus (Mouse).